The primary structure comprises 441 residues: Probable cyclic di-GMP phosphodiesterase VC_1348 (441 aa).

A Response regulatory domain is found at 72 to 187; sequence TILIVDDSPD…LLKSRVHTHL (116 aa). Asp-120 carries the 4-aspartylphosphate modification. In terms of domain architecture, HD-GYP spans 214 to 425; it reads LDRMQDAVVF…FIDIAQKFAD (212 aa).

It carries out the reaction 3',3'-c-di-GMP + 2 H2O = 2 GMP + 2 H(+). Probable phosphodiesterase (PDE) that catalyzes the hydrolysis of cyclic diguanylate (c-di-GMP). Increases motility and decreases biofilm formation in vivo. The polypeptide is Probable cyclic di-GMP phosphodiesterase VC_1348 (Vibrio cholerae serotype O1 (strain ATCC 39315 / El Tor Inaba N16961)).